A 147-amino-acid polypeptide reads, in one-letter code: MADFDMVLKCWGLVEADYATYGSLVLTRLFTEHPETLKLFPKFAGIAHGDLAGDAGVSAHGATVLNKLGDLLKARGGHAALLKPLSSSHATKHKIPIINFKLIAEVIGKVMEEKAGLDAAGQTALRNVMAVIIADMEADYKELGFTE.

Residues 2 to 141 (ADFDMVLKCW…IIADMEADYK (140 aa)) enclose the Globin domain. H60 lines the nitrite pocket. H60 lines the O2 pocket. Heme b is bound at residue H89.

This sequence belongs to the globin family. In terms of assembly, monomeric.

It localises to the cytoplasm. The protein resides in the sarcoplasm. It carries out the reaction Fe(III)-heme b-[protein] + nitric oxide + H2O = Fe(II)-heme b-[protein] + nitrite + 2 H(+). It catalyses the reaction H2O2 + AH2 = A + 2 H2O. In terms of biological role, monomeric heme protein which primary function is to store oxygen and facilitate its diffusion within muscle tissues. Reversibly binds oxygen through a pentacoordinated heme iron and enables its timely and efficient release as needed during periods of heightened demand. Depending on the oxidative conditions of tissues and cells, and in addition to its ability to bind oxygen, it also has a nitrite reductase activity whereby it regulates the production of bioactive nitric oxide. Under stress conditions, like hypoxia and anoxia, it also protects cells against reactive oxygen species thanks to its pseudoperoxidase activity. This Pseudochaenichthys georgianus (South Georgia icefish) protein is Myoglobin (mb).